We begin with the raw amino-acid sequence, 351 residues long: Alcohol dehydrogenase 5 (351 aa).

The Zn(2+) site is built by Cys47, His70, Cys101, Cys104, Cys107, Cys115, and Cys183. NAD(+) is bound by residues 181–187, Asp205, Lys210, 272–274, and Arg344; these read GACGGLG and VGM.

This sequence belongs to the zinc-containing alcohol dehydrogenase family. It depends on Zn(2+) as a cofactor.

It carries out the reaction a primary alcohol + NAD(+) = an aldehyde + NADH + H(+). It catalyses the reaction a secondary alcohol + NAD(+) = a ketone + NADH + H(+). The chain is Alcohol dehydrogenase 5 (ADH5) from Saccharomyces pastorianus (Lager yeast).